Here is a 555-residue protein sequence, read N- to C-terminus: MSKQIVHGDQCRKKIIEGINVVANAVGITLGPKGRCVAIEQSYGPPKITKDGVSVAKAIQLKDKSLNVGAQFVISVASKTADVAGDGTTTATVIADAAVRELNKAEVAGIDIQEVRKGAEKAVEAVIADVRKNSSPVKNEEEIAQVATVSSNGDREIGEKIANAMKQVGQEGVITVEDSKNFNFEVEVVKGMRFDRGYISQYFATNREKMITEFENPYILLLDQKVSTVQPLVPVLEAVAHTGKPLVLIADDVDGEALTALILNNLKGSIKVVAVKAPGFGDRKKEMLEDIAILTNGEVITEQLGIKLEKVNDTSKLGTANRVIVTKDHTTIVHDKNNSDIEKKVNSRCEQIREAIKDTTSDYEKEKLQERLAKLRNGVAVLKVGGATEVEQKERKDRVEDALHATRAAVEEGIVPGGGVALFYASRVLDSLKFDNEDQRVGINIIKKVLEAPVRQIVKNAGGKEDVVVNELSKSNDKNRGFDARTMQYVDMIKAGIVDPTKVVRTALQDAFSVASLVIATSAMITDHEEDNNTGNRSGGGVGGGHHGGMGGMDF.

Residues Thr-29 to Pro-32, Lys-50, Asp-86 to Thr-90, Gly-418, and Asp-499 contribute to the ATP site. The tract at residues His-528 to Phe-555 is disordered. Over residues Arg-537–Phe-555 the composition is skewed to gly residues.

The protein belongs to the chaperonin (HSP60) family. Forms a cylinder of 14 subunits composed of two heptameric rings stacked back-to-back. Interacts with the co-chaperonin GroES.

The protein localises to the cytoplasm. It catalyses the reaction ATP + H2O + a folded polypeptide = ADP + phosphate + an unfolded polypeptide.. Together with its co-chaperonin GroES, plays an essential role in assisting protein folding. The GroEL-GroES system forms a nano-cage that allows encapsulation of the non-native substrate proteins and provides a physical environment optimized to promote and accelerate protein folding. The polypeptide is Chaperonin GroEL (Orientia tsutsugamushi (strain Ikeda) (Rickettsia tsutsugamushi)).